The chain runs to 195 residues: Thymidine kinase (195 aa).

ATP-binding positions include 9 to 16 (STMNAGKS) and 87 to 90 (DEAQ). The Proton acceptor role is filled by Glu88. The Zn(2+) site is built by Cys145, Cys147, Cys182, and His185.

It belongs to the thymidine kinase family. Homotetramer.

It is found in the cytoplasm. It carries out the reaction thymidine + ATP = dTMP + ADP + H(+). The sequence is that of Thymidine kinase from Jannaschia sp. (strain CCS1).